A 275-amino-acid chain; its full sequence is Autophagy protein 5 (275 aa).

Residue methionine 1 is modified to N-acetylmethionine. Residue lysine 130 forms a Glycyl lysine isopeptide (Lys-Gly) (interchain with G-Cter in ATG12) linkage.

Belongs to the ATG5 family. In terms of assembly, forms a conjugate with ATG12. Part of the minor complex composed of 4 sets of ATG12-ATG5 and ATG16L1 (400 kDa); this complex interacts with ATG3 leading to disruption of ATG7 interaction and promotion of ATG8-like proteins lipidation. Forms an 800-kDa complex composed of ATG12-ATG5 and ATG16L2. The ATG12-ATG5 conjugate interacts with RAB33A; this interaction is bridged by ATG16L1 and promotes ATG12-ATG5-ATG16L1 complex recruitment to phagophores. Interacts with TECPR1; the interaction is direct and does not take place when ATG16L1 is associated with the ATG5-ATG12 conjugate. Interacts with DHX58/RIG-1, IFIH1/MDA5 and MAVS/IPS-1 in monomeric form as well as in ATG12-ATG5 conjugate form. The interaction with MAVS is further enhanced upon vesicular stomatitis virus (VSV) infection. Interacts with ATG3. Interacts with ATG7 and ATG10. Interacts with FADD. Interacts with Bassoon/BSN; this interaction is important for the regulation of presynaptic autophagy. Interacts with ATG16L2. Conjugated to ATG12; which is essential for autophagy, but is not required for association with isolation membrane. In terms of processing, acetylated by EP300.

Its subcellular location is the cytoplasm. The protein localises to the preautophagosomal structure membrane. Involved in autophagic vesicle formation. Conjugation with ATG12, through a ubiquitin-like conjugating system involving ATG7 as an E1-like activating enzyme and ATG10 as an E2-like conjugating enzyme, is essential for its function. The ATG12-ATG5 conjugate acts as an E3-like enzyme which is required for lipidation of ATG8 family proteins and their association to the vesicle membranes. Involved in mitochondrial quality control after oxidative damage, and in subsequent cellular longevity. Plays a critical role in multiple aspects of lymphocyte development and is essential for both B and T lymphocyte survival and proliferation. Required for optimal processing and presentation of antigens for MHC II. Involved in the maintenance of axon morphology and membrane structures, as well as in normal adipocyte differentiation. Promotes primary ciliogenesis through removal of OFD1 from centriolar satellites and degradation of IFT20 via the autophagic pathway. As part of the ATG8 conjugation system with ATG12 and ATG16L1, required for recruitment of LRRK2 to stressed lysosomes and induction of LRRK2 kinase activity in response to lysosomal stress. Functionally, may play an important role in the apoptotic process, possibly within the modified cytoskeleton. Its expression is a relatively late event in the apoptotic process, occurring downstream of caspase activity. Plays a crucial role in IFN-gamma-induced autophagic cell death by interacting with FADD. This chain is Autophagy protein 5, found in Bos taurus (Bovine).